Reading from the N-terminus, the 470-residue chain is Cell division protein FtsA (470 aa).

Residues 416–470 (NKKDTHENEVESTDEEIYQSEDNHQEHKQNHEHVQDKDKDKEESKFKKLMKSLFE) form a disordered region. A compositionally biased stretch (acidic residues) spans 425-434 (VESTDEEIYQ). Positions 436–461 (EDNHQEHKQNHEHVQDKDKDKEESKF) are enriched in basic and acidic residues.

The protein belongs to the FtsA/MreB family. As to quaternary structure, self-interacts. Interacts with FtsZ.

The protein localises to the cell membrane. In terms of biological role, cell division protein that is involved in the assembly of the Z ring. May serve as a membrane anchor for the Z ring. This is Cell division protein FtsA from Staphylococcus aureus (strain NCTC 8325 / PS 47).